Here is a 204-residue protein sequence, read N- to C-terminus: uncharacterized protein (204 aa).

It localises to the mitochondrion. This is an uncharacterized protein from Arabidopsis thaliana (Mouse-ear cress).